A 362-amino-acid chain; its full sequence is F-box protein At1g54550 (362 aa).

The 47-residue stretch at 1 to 47 (MATVTDLPDDLVREIFSRVPLTSLRAVRSTCKKWNAISKYDILGKKA) folds into the F-box domain.

The sequence is that of F-box protein At1g54550 from Arabidopsis thaliana (Mouse-ear cress).